The primary structure comprises 222 residues: Uridine diphosphate glucose pyrophosphatase NUDT14 (222 aa).

The 169-residue stretch at 38 to 206 folds into the Nudix hydrolase domain; sequence KTHDSVTILM…DIPKTLGVIY (169 aa). Residues 111–129 carry the Nudix box motif; the sequence is PGLSLEEAACKEAWEECGY.

The protein belongs to the Nudix hydrolase family. Homodimer. Requires Mg(2+) as cofactor.

The protein resides in the cytoplasm. The enzyme catalyses UDP-sugar + H2O = UMP + alpha-D-aldose 1-phosphate.. In terms of biological role, hydrolyzes UDP-glucose to glucose 1-phosphate and UMP and ADP-ribose to ribose 5-phosphate and AMP. The physiological substrate is probably UDP-glucose. Poor activity on other substrates such as ADP-glucose, CDP-glucose, GDP-glucose and GDP-mannose. In Mus musculus (Mouse), this protein is Uridine diphosphate glucose pyrophosphatase NUDT14 (Nudt14).